A 318-amino-acid polypeptide reads, in one-letter code: Taste receptor type 2 member 14 (318 aa).

At 1-7 the chain is on the extracellular side; the sequence is MGGVIKN. A helical transmembrane segment spans residues 8–28; the sequence is ISTFVLIVEFIIGNLGNSFIA. Residues 29-55 are Cytoplasmic-facing; it reads LVNCIDWVKRRKISLVDQLLTALAISR. A helical membrane pass occupies residues 56 to 76; sequence ISLVWLIFGSWCVSAFFPALF. Topologically, residues 77–87 are extracellular; the sequence is ATEKMFRMLTN. Positions 86 and 89 each coordinate cholesterol. A helical transmembrane segment spans residues 88–108; that stretch reads IWAVTNHFSVWLATGLGTFYF. At 109–129 the chain is on the cytoplasmic side; sequence LKIANFSNSIFIYLKWRVKKV. Residues 130–150 traverse the membrane as a helical segment; that stretch reads VLVLLLVTSVFLFLNIALINI. The Extracellular segment spans residues 151-184; the sequence is HINASINGYGGNKTCSSDSNDFTRFSSLIALTSS. Residues Asn153 and Asn162 are each glycosylated (N-linked (GlcNAc...) asparagine). Ala180 is a cholesterol binding site. A helical transmembrane segment spans residues 185–205; that stretch reads VFIFIPFILSLAIFLLLTFSL. The Cytoplasmic portion of the chain corresponds to 206–232; it reads WKHCKKMQHTVKASGDASTKAHRGVMQ. Residues 233–253 form a helical membrane-spanning segment; it reads TVIAFLLLYPIFSLSFFIAVW. The Extracellular portion of the chain corresponds to 254–261; it reads TSGWLEEN. A helical membrane pass occupies residues 262–282; it reads LIILSQVMGMAYPSCHSCILI. Cholesterol-binding residues include Leu265 and Val268. Over 283–317 the chain is Cytoplasmic; that stretch reads LGNKKLRQASLSVLWWLKYRFKDGEPSGHKGFRES.

This sequence belongs to the G-protein coupled receptor T2R family. In terms of assembly, core component of the TAS2R14-GNAI1 complex, consisting of TAS2R14, GNAI1, GNB1 and GNG2; within the complex interacts with GNAI1. Core component of the TAS2R14-GNAT3 complex, consisting of TAS2R14, GNAT3, GNB1 and GNG2; within the complex interacts with GNAT3. Core component of the TAS2R14-GNAS2 complex, consisting of TAS2R14, GNAS2, GNB1 and GNG2; within the complex interacts with GNAS2.

Its subcellular location is the membrane. The enzyme catalyses Ca(2+)(in) = Ca(2+)(out). It carries out the reaction 3',5'-cyclic AMP(in) = 3',5'-cyclic AMP(out). Its activity is regulated as follows. Basal activity is enhanced by binding to bitter tastants, such as flufenamic acid and aristolochic acid. Regulated by cholesterol in a concentration-dependent manner. Functionally, gustducin-linked G-protein coupled receptor that plays a role in the perception of bitterness. The activity of this receptor stimulates GNAT3, activating the gustducin G-protein pathway. Likely plays a role in sensing the chemical composition of the gastrointestinal content and other extra-oral tissues via the inhibitory G-protein pathways. The protein is Taste receptor type 2 member 14 (TAS2R14) of Pongo pygmaeus (Bornean orangutan).